The chain runs to 912 residues: Tubulin polyglutamylase TTLL7 (912 aa).

Positions 38 to 390 constitute a TTL domain; it reads KGIITANVAG…RTSDKRKNLA (353 aa). ATP-binding positions include Lys-160, 166–167, 188–191, and 201–203; these read MG, QEYI, and KFD. An L-glutamate-binding site is contributed by Arg-227. Position 249–250 (249–250) interacts with ATP; that stretch reads TN. Tyr-251, Ser-252, and Lys-271 together coordinate L-glutamate. 3 residues coordinate Mg(2+): Asp-336, Glu-349, and Asn-351. L-glutamate is bound at residue Lys-367. The interval 388 to 450 is c-MTBD region; sequence NLAKQKAEAQ…VSQEEHENRH (63 aa). 2 disordered regions span residues 547 to 570 and 658 to 688; these read YGSS…ENEK and PTSA…STNT. Positions 549–563 are enriched in low complexity; it reads SSDSSYDSSSSSSNS. Over residues 659-671 the composition is skewed to polar residues; that stretch reads TSASRSHSLNRAS.

It belongs to the tubulin--tyrosine ligase family. In terms of assembly, interacts with both alpha- and beta-tubulin (via C-terminal tubulin tails). It depends on Mg(2+) as a cofactor. Highly expressed in brain, testis and trachea. Expressed in brain, heart, kidney, liver, lung, muscle and trachea. In the brain, highly expressed in hippocampus, thalamus, olfactory bulb and cerebellum cortex, corpus callosum and striatum.

The protein resides in the cell projection. The protein localises to the cilium. It localises to the cytoplasm. It is found in the cytoskeleton. Its subcellular location is the cilium basal body. The protein resides in the dendrite. The protein localises to the perikaryon. It catalyses the reaction L-glutamyl-[protein] + L-glutamate + ATP = gamma-L-glutamyl-L-glutamyl-[protein] + ADP + phosphate + H(+). The catalysed reaction is (L-glutamyl)(n)-gamma-L-glutamyl-L-glutamyl-[protein] + L-glutamate + ATP = (L-glutamyl)(n+1)-gamma-L-glutamyl-L-glutamyl-[protein] + ADP + phosphate + H(+). Functionally, polyglutamylase which modifies tubulin, generating polyglutamate side chains of variable lengths on the gamma-carboxyl group of specific glutamate residues within the C-terminal tail of tubulin. Mediates both ATP-dependent initiation and elongation steps of the polyglutamylation reaction. Preferentially modifies the beta-tubulin tail over an alpha-tail. Competes with monoglycylase TTLL3 for modification site on beta-tubulin substrate, thereby creating an anticorrelation between glycylation and glutamylation reactions. Required for neurite growth; responsible for the strong increase in tubulin polyglutamylation during postnatal neuronal maturation. This Mus musculus (Mouse) protein is Tubulin polyglutamylase TTLL7.